The sequence spans 349 residues: Myocyte-specific enhancer factor 2B (349 aa).

The 55-residue stretch at 3–57 (RKKIQISRILDQRNRQVTFTKRKFGLMKKAYELSVLCDCDIALIIFNSAQRLFQY) folds into the MADS-box domain. A DNA-binding region (mef2-type) is located at residues 58–86 (ASSDMDRVLLKYTEYSEPHESRTNADILQ). Disordered stretches follow at residues 237 to 317 (GSFA…DFPR) and 330 to 349 (AEPLRPSASLHRLTPDSWPR).

The protein belongs to the MEF2 family. Heterodimer. Interacts with HDAC9. Interacts with HDAC7. In terms of tissue distribution, highest expression found in embryonic heart and skeletal muscle. Low levels found in adult spleen, lung and testis while no expression is found in adult heart, brain or skeletal muscle.

The protein resides in the nucleus. In terms of biological role, transcriptional activator which binds specifically to the MEF2 element, 5'-YTA[AT](4)TAR-3', found in numerous muscle-specific genes. Activates transcription via this element. May be involved in muscle-specific and/or growth factor-related transcription. This Mus musculus (Mouse) protein is Myocyte-specific enhancer factor 2B (Mef2b).